A 278-amino-acid polypeptide reads, in one-letter code: Octanoyltransferase LipM (278 aa).

In terms of domain architecture, BPL/LPL catalytic spans 33–248 (KKMPPTIRFY…GFEKGLDVEL (216 aa)). Cys150 serves as the catalytic Acyl-thioester intermediate.

The protein belongs to the octanoyltransferase LipM family. Monomer.

The enzyme catalyses octanoyl-[ACP] + L-lysyl-[protein] = N(6)-octanoyl-L-lysyl-[protein] + holo-[ACP] + H(+). Its pathway is protein modification; protein lipoylation via endogenous pathway; protein N(6)-(lipoyl)lysine from octanoyl-[acyl-carrier-protein]. Functionally, catalyzes the transfer of endogenously produced octanoic acid from octanoyl-acyl-carrier-protein onto the lipoyl domain of GcvH, an intermediate carrier during protein lipoylation. This chain is Octanoyltransferase LipM, found in Bacillus anthracis.